The chain runs to 30 residues: Fibrinogen (30 aa).

As to quaternary structure, homodimer. As to expression, secreted into the hemolymph.

Its subcellular location is the secreted. The protein resides in the extracellular space. In terms of biological role, clotting protein. The protein is Fibrinogen of Panulirus interruptus (California spiny lobster).